An 800-amino-acid chain; its full sequence is Putative antiporter subunit mnhA2 (800 aa).

20 consecutive transmembrane segments (helical) span residues 1 to 21 (MSLV…LLMS), 33 to 53 (IALV…PSVA), 78 to 98 (GLSL…FFYA), 118 to 138 (LFMF…MYIF), 167 to 187 (FMIT…LYIM), 207 to 227 (GLFI…SAQF), 241 to 261 (TPVS…FLLL), 273 to 293 (YIYI…ITAL), 300 to 320 (GILA…VGIG), 331 to 351 (IASI…NHAI), 387 to 407 (LVMT…GFLS), 424 to 444 (FSLI…IFTF), 472 to 492 (PWLF…IFFV), 527 to 547 (GFNI…VLAI), 595 to 615 (IIMT…RIGL), 627 to 647 (GALE…LIFI), 651 to 671 (LTMV…FIAM), 676 to 696 (LALT…VSFS), 712 to 732 (IIKI…IFIT), and 768 to 788 (LDTL…YTLL).

The protein belongs to the CPA3 antiporters (TC 2.A.63) subunit A family. In terms of assembly, may form a heterooligomeric complex that consists of seven subunits: mnhA2, mnhB2, mnhC2, mnhD2, mnhE2, mnhF2 and mnhG2.

It localises to the cell membrane. This chain is Putative antiporter subunit mnhA2 (mnhA2), found in Staphylococcus aureus (strain Mu3 / ATCC 700698).